A 339-amino-acid chain; its full sequence is 4-hydroxythreonine-4-phosphate dehydrogenase (339 aa).

Substrate contacts are provided by H141 and T142. A divalent metal cation contacts are provided by H171, H215, and H270. Residues K278, N287, and R296 each contribute to the substrate site.

It belongs to the PdxA family. As to quaternary structure, homodimer. Zn(2+) is required as a cofactor. Requires Mg(2+) as cofactor. Co(2+) serves as cofactor.

It localises to the cytoplasm. It carries out the reaction 4-(phosphooxy)-L-threonine + NAD(+) = 3-amino-2-oxopropyl phosphate + CO2 + NADH. It participates in cofactor biosynthesis; pyridoxine 5'-phosphate biosynthesis; pyridoxine 5'-phosphate from D-erythrose 4-phosphate: step 4/5. Catalyzes the NAD(P)-dependent oxidation of 4-(phosphooxy)-L-threonine (HTP) into 2-amino-3-oxo-4-(phosphooxy)butyric acid which spontaneously decarboxylates to form 3-amino-2-oxopropyl phosphate (AHAP). The chain is 4-hydroxythreonine-4-phosphate dehydrogenase from Geobacter metallireducens (strain ATCC 53774 / DSM 7210 / GS-15).